Consider the following 402-residue polypeptide: MAKRSLSNLSVEDLCGKRVLVRVDFNVPLNEEGSITDDTRIRAALPTIQHLIEKEARVILSAHFGRPKGKVNEDMRLTPVSQRLSELLGKTVVKTESCIGPDAEKKVHEMSNGDVVLLENVRFIGEEEKNDSEFAKKLASLAEVYVNDAFGAAHRAHASTEGVTNYLSPSVAGYLMEKELKYLQGAIDSPQRPLAAIVGGSKVSSKIGVLESLIDKCDKVLIGGGMIFTFYKARGLSVGKSLVEDDKLDLARALEKKAKEKGVQLLLPSDVVLADNFSPDASSQMVQIDSIPEGWMGLDIGKESVKLFQDALADCKTVIWNGPMGVFEFDKFANGTNSISTTLAELSAKGCCTIIGGGDSVAAVEKAGLASKMSHISTGGGASLELLEGKVLPGVAALDDEI.

Substrate-binding positions include 24–26 (DFN), Arg40, 63–66 (HFGR), Arg122, and Arg155. ATP is bound by residues Lys206, Gly297, Glu328, and 357–360 (GGDS).

The protein belongs to the phosphoglycerate kinase family. Monomer.

Its subcellular location is the cytoplasm. It catalyses the reaction (2R)-3-phosphoglycerate + ATP = (2R)-3-phospho-glyceroyl phosphate + ADP. Its pathway is carbohydrate degradation; glycolysis; pyruvate from D-glyceraldehyde 3-phosphate: step 2/5. The protein is Phosphoglycerate kinase of Prochlorococcus marinus (strain SARG / CCMP1375 / SS120).